The primary structure comprises 511 residues: 2-isopropylmalate synthase (511 aa).

Residues 1-16 show a composition bias toward basic and acidic residues; the sequence is MTRKIDIFDTTLRDGE. The segment at 1–23 is disordered; it reads MTRKIDIFDTTLRDGEQSPGASM. In terms of domain architecture, Pyruvate carboxyltransferase spans 5–268; sequence IDIFDTTLRD…HTDVVTQELT (264 aa). 4 residues coordinate Mn(2+): Asp14, His203, His205, and Asn239. The segment at 392-511 is regulatory domain; sequence ALESVQVVCG…IQTTRSKQGK (120 aa).

It belongs to the alpha-IPM synthase/homocitrate synthase family. LeuA type 1 subfamily. In terms of assembly, homodimer. Requires Mn(2+) as cofactor.

The protein resides in the cytoplasm. It carries out the reaction 3-methyl-2-oxobutanoate + acetyl-CoA + H2O = (2S)-2-isopropylmalate + CoA + H(+). The protein operates within amino-acid biosynthesis; L-leucine biosynthesis; L-leucine from 3-methyl-2-oxobutanoate: step 1/4. Catalyzes the condensation of the acetyl group of acetyl-CoA with 3-methyl-2-oxobutanoate (2-ketoisovalerate) to form 3-carboxy-3-hydroxy-4-methylpentanoate (2-isopropylmalate). This is 2-isopropylmalate synthase from Olsenella uli (strain ATCC 49627 / DSM 7084 / CCUG 31166 / CIP 109912 / JCM 12494 / LMG 11480 / NCIMB 702895 / VPI D76D-27C) (Lactobacillus uli).